Here is a 209-residue protein sequence, read N- to C-terminus: Orotate phosphoribosyltransferase (209 aa).

Residues arginine 96, lysine 100, histidine 102, and 122-130 contribute to the 5-phospho-alpha-D-ribose 1-diphosphate site; that span reads EDLISTGGS. Position 126 (serine 126) interacts with orotate.

Belongs to the purine/pyrimidine phosphoribosyltransferase family. PyrE subfamily. As to quaternary structure, homodimer. It depends on Mg(2+) as a cofactor.

It catalyses the reaction orotidine 5'-phosphate + diphosphate = orotate + 5-phospho-alpha-D-ribose 1-diphosphate. It functions in the pathway pyrimidine metabolism; UMP biosynthesis via de novo pathway; UMP from orotate: step 1/2. Functionally, catalyzes the transfer of a ribosyl phosphate group from 5-phosphoribose 1-diphosphate to orotate, leading to the formation of orotidine monophosphate (OMP). In Lactococcus lactis subsp. lactis (strain IL1403) (Streptococcus lactis), this protein is Orotate phosphoribosyltransferase.